The sequence spans 278 residues: Undecaprenyl-diphosphatase 2 (278 aa).

7 consecutive transmembrane segments (helical) span residues 43-63 (GAAFTAITQIGTEMAVLVYFW), 88-108 (ARLGWLIIVGSVPIVFLGLFF), 119-139 (LYITAVMLIVFGIVLGLADRI), 149-169 (LIWRDGILFGFAQAMALIPGV), 194-214 (FLLAVPAVFGSGFYQLFKSIG), 226-246 (LATLIAFIVGYAVIVVFLKLV), and 254-274 (FVWYRVVIGFILLALLGTGVI).

Belongs to the UppP family.

It localises to the cell inner membrane. The catalysed reaction is di-trans,octa-cis-undecaprenyl diphosphate + H2O = di-trans,octa-cis-undecaprenyl phosphate + phosphate + H(+). Catalyzes the dephosphorylation of undecaprenyl diphosphate (UPP). Confers resistance to bacitracin. In Agrobacterium fabrum (strain C58 / ATCC 33970) (Agrobacterium tumefaciens (strain C58)), this protein is Undecaprenyl-diphosphatase 2.